Consider the following 401-residue polypeptide: S-adenosylmethionine synthase (401 aa).

135–140 serves as a coordination point for ATP; that stretch reads GHGSGD.

Belongs to the AdoMet synthase 2 family. Requires Mg(2+) as cofactor.

The catalysed reaction is L-methionine + ATP + H2O = S-adenosyl-L-methionine + phosphate + diphosphate. The protein operates within amino-acid biosynthesis; S-adenosyl-L-methionine biosynthesis; S-adenosyl-L-methionine from L-methionine: step 1/1. Catalyzes the formation of S-adenosylmethionine from methionine and ATP. The chain is S-adenosylmethionine synthase (mat) from Methanothermobacter marburgensis (strain ATCC BAA-927 / DSM 2133 / JCM 14651 / NBRC 100331 / OCM 82 / Marburg) (Methanobacterium thermoautotrophicum).